The following is a 339-amino-acid chain: Very-long-chain 3-oxoacyl-CoA reductase (339 aa).

A helical membrane pass occupies residues 21 to 41 (WTTFLLALGSFNALRIIYQTL). NADP(+) contacts are provided by Val-67, Asn-96, Asp-121, Asn-148, Tyr-215, Lys-219, Val-248, and Ser-250. The active-site Proton acceptor is Tyr-215. Lys-219 serves as the catalytic Lowers pKa of active site Tyr.

The protein belongs to the short-chain dehydrogenases/reductases (SDR) family.

The protein localises to the endoplasmic reticulum membrane. It catalyses the reaction a very-long-chain (3R)-3-hydroxyacyl-CoA + NADP(+) = a very-long-chain 3-oxoacyl-CoA + NADPH + H(+). The protein operates within lipid metabolism; fatty acid biosynthesis. Component of the microsomal membrane bound fatty acid elongation system, which produces the 26-carbon very long-chain fatty acids (VLCFA) from palmitate. Catalyzes the reduction of the 3-ketoacyl-CoA intermediate that is formed in each cycle of fatty acid elongation. VLCFAs serve as precursors for ceramide and sphingolipids. The chain is Very-long-chain 3-oxoacyl-CoA reductase from Coprinopsis cinerea (strain Okayama-7 / 130 / ATCC MYA-4618 / FGSC 9003) (Inky cap fungus).